We begin with the raw amino-acid sequence, 497 residues long: Delayed-rectifier potassium channel regulatory subunit KCNS1 (497 aa).

Over 1 to 186 (MVSEFPGPGS…LTMENPGYSL (186 aa)) the chain is Cytoplasmic. Residues 187-208 (PSKLFSCVSIGVVLASIAAMCI) form a helical membrane-spanning segment. At 209 to 239 (HSLPEYQAREAAAAVAAVAAGRSAEDVRDDP) the chain is on the extracellular side. A helical membrane pass occupies residues 240-262 (VLRRLEYFCIAWFSFEVSSRLLL). Residues 263-273 (APSTRNFFCHP) are Cytoplasmic-facing. A helical membrane pass occupies residues 274-291 (LNLIDIVSVLPFYLTLLA). Residues 292–309 (GAALGDRRGASGEELGDL) lie on the Extracellular side of the membrane. A helical; Voltage-sensor membrane pass occupies residues 310 to 330 (GKVVQVFRLMRIFRVLKLARH). Topologically, residues 331 to 345 (STGLRSLGATLKHSY) are cytoplasmic. Residues 346-367 (REVGILLLYLAVGVSVFSGVAY) traverse the membrane as a helical segment. Topologically, residues 368 to 379 (TAEEKNVGFDTI) are extracellular. An intramembrane region (helical) is located at residues 380–391 (PACWWWGTVSMT). Residues 392-397 (TVGYGD) carry the Selectivity filter motif. Residues 392-399 (TVGYGDVV) lie within the membrane without spanning it. Residues 400–406 (PETVAGK) lie on the Extracellular side of the membrane. A helical membrane pass occupies residues 407 to 435 (LAASGCILGGILVVALPITIIFNKFSHFY). Residues 436 to 497 (RRQKALEAAV…PSEPAKSHSY (62 aa)) lie on the Cytoplasmic side of the membrane. The tract at residues 464–497 (SDVSLETSRETSQEGRSTDLETQAPSEPAKSHSY) is disordered. A compositionally biased stretch (basic and acidic residues) spans 470–482 (TSRETSQEGRSTD).

It belongs to the potassium channel family. S (TC 1.A.1.2) subfamily. Kv9.1/KCNS1 sub-subfamily. As to quaternary structure, heterotetramer with KCNB1. Heterotetramer with KCNB2. Does not form homomultimers. As to expression, highly expressed in brain, but not in the other tissues tested.

It localises to the cell membrane. Potassium channel regulatory subunit that modulate the delayed rectifier voltage-gated potassium channel activity of KCNB1 and KCNB2 by altering their kinetics, expression levels, and shifting the half-inactivation potential to more polarized values. While it does not form functional channels on its own, it can form functional heterotetrameric channels with KCNB1 and KCNB2. Each regulatory subunit has unique regulatory properties that can lead to extensive inhibition, significant changes in kinetics, and/or substantial shifts in the voltage dependencies of the inactivation process. This is Delayed-rectifier potassium channel regulatory subunit KCNS1 from Rattus norvegicus (Rat).